The sequence spans 204 residues: ATP-dependent Clp protease proteolytic subunit (204 aa).

Ser-101 functions as the Nucleophile in the catalytic mechanism. His-126 is an active-site residue.

The protein belongs to the peptidase S14 family. As to quaternary structure, fourteen ClpP subunits assemble into 2 heptameric rings which stack back to back to give a disk-like structure with a central cavity, resembling the structure of eukaryotic proteasomes.

The protein resides in the cytoplasm. It carries out the reaction Hydrolysis of proteins to small peptides in the presence of ATP and magnesium. alpha-casein is the usual test substrate. In the absence of ATP, only oligopeptides shorter than five residues are hydrolyzed (such as succinyl-Leu-Tyr-|-NHMec, and Leu-Tyr-Leu-|-Tyr-Trp, in which cleavage of the -Tyr-|-Leu- and -Tyr-|-Trp bonds also occurs).. Cleaves peptides in various proteins in a process that requires ATP hydrolysis. Has a chymotrypsin-like activity. Plays a major role in the degradation of misfolded proteins. This is ATP-dependent Clp protease proteolytic subunit from Deinococcus radiodurans (strain ATCC 13939 / DSM 20539 / JCM 16871 / CCUG 27074 / LMG 4051 / NBRC 15346 / NCIMB 9279 / VKM B-1422 / R1).